Here is a 157-residue protein sequence, read N- to C-terminus: Transcription elongation factor GreA (157 aa).

A compositionally biased stretch (basic and acidic residues) spans 25–43; it reads EGRAKVAEQLSEARDKGDL. The interval 25–47 is disordered; sequence EGRAKVAEQLSEARDKGDLSENA. Residues 43–79 adopt a coiled-coil conformation; it reads LSENAEYDAAKEAQEILERRIAKLEELMINARVINKD.

The protein belongs to the GreA/GreB family.

Its function is as follows. Necessary for efficient RNA polymerase transcription elongation past template-encoded arresting sites. The arresting sites in DNA have the property of trapping a certain fraction of elongating RNA polymerases that pass through, resulting in locked ternary complexes. Cleavage of the nascent transcript by cleavage factors such as GreA or GreB allows the resumption of elongation from the new 3'terminus. GreA releases sequences of 2 to 3 nucleotides. The sequence is that of Transcription elongation factor GreA from Amoebophilus asiaticus (strain 5a2).